The chain runs to 312 residues: uncharacterized protein (312 aa).

In terms of domain architecture, HTH lysR-type spans 8-65 (PGLTCFEIFLAIAEAGSLGGAARELGLTQQAVSRRLASMEAQIGVRLAIRTTRGSQLT). Residues 25 to 45 (LGGAARELGLTQQAVSRRLAS) constitute a DNA-binding region (H-T-H motif).

The protein belongs to the LysR transcriptional regulatory family.

This is an uncharacterized protein from Mycobacterium tuberculosis (strain CDC 1551 / Oshkosh).